Consider the following 254-residue polypeptide: Phosphate import ATP-binding protein PstB (254 aa).

The 243-residue stretch at 7–249 (MVAESMSFYY…PREKQTEDYI (243 aa)) folds into the ABC transporter domain. An ATP-binding site is contributed by 39-46 (GPSGCGKS).

Belongs to the ABC transporter superfamily. Phosphate importer (TC 3.A.1.7) family. As to quaternary structure, the complex is composed of two ATP-binding proteins (PstB), two transmembrane proteins (PstC and PstA) and a solute-binding protein (PstS).

It localises to the cell inner membrane. The catalysed reaction is phosphate(out) + ATP + H2O = ADP + 2 phosphate(in) + H(+). Functionally, part of the ABC transporter complex PstSACB involved in phosphate import. Responsible for energy coupling to the transport system. The chain is Phosphate import ATP-binding protein PstB from Chlorobium chlorochromatii (strain CaD3).